Here is a 632-residue protein sequence, read N- to C-terminus: Chaperone protein DnaK (632 aa).

T198 bears the Phosphothreonine; by autocatalysis mark.

The protein belongs to the heat shock protein 70 family.

Its function is as follows. Acts as a chaperone. The sequence is that of Chaperone protein DnaK from Rhodopseudomonas palustris (strain BisB18).